We begin with the raw amino-acid sequence, 546 residues long: Crossover junction endonuclease EME1A (546 aa).

Disordered regions lie at residues 1–55 and 88–232; these read MSDF…FLDE and VISL…REKQ. Residues 28–49 show a composition bias toward polar residues; sequence PTDLNLDTEPSLQKQPPGSAST. 2 stretches are compositionally biased toward basic and acidic residues: residues 103-120 and 149-167; these read SSKKYEPVYTDSWKKPCR and DAIEVDSDHEKEDTGVEKM. A compositionally biased stretch (polar residues) spans 173 to 183; it reads TITSKSTSLSA. A coiled-coil region spans residues 188–245; that stretch reads KKKMSKDEKTRAAEEKKLQKEQEKLQKAASKAEDAEHKKLEREKQKWAKEKDKALKCI. The segment covering 192–232 has biased composition (basic and acidic residues); sequence SKDEKTRAAEEKKLQKEQEKLQKAASKAEDAEHKKLEREKQ. Positions 278–478 constitute an ERCC4 domain; sequence NPIQRSIVWT…PSLKSLLKVY (201 aa).

Belongs to the EME1/MMS4 family. In terms of assembly, forms a heterodimer with MUS81. The cofactor is Mg(2+). Ca(2+) is required as a cofactor.

It is found in the nucleus. Functionally, interacts with MUS81 to form a DNA structure-specific endonuclease with substrate preference for branched DNA structures with a 5'-end at the branch nick. Typical substrates include 3'-flap structures, D-loops, replication forks, nicked Holliday junctions and also intact Holliday junctions with a reduced efficiency. May be required in mitosis for the processing of stalled or collapsed replication fork intermediates. Plays a role in DNA repair and in genotoxic stress-induced homologous recombination (HR) in somatic cells. Mediates a subset of meiotic recombination events that are insensitive to crossover interference. The chain is Crossover junction endonuclease EME1A (EME1A) from Arabidopsis thaliana (Mouse-ear cress).